The following is a 356-amino-acid chain: Probable neutral protease 2 homolog TRV_06370 (356 aa).

An N-terminal signal peptide occupies residues 1 to 17; it reads MQFTALLAALGAPLALA. Residues 18–183 constitute a propeptide that is removed on maturation; that stretch reads ASIPAAAHNH…DDSTGVIDKR (166 aa). Disulfide bonds link C191–C262 and C269–C287. H311 provides a ligand contact to Zn(2+). E312 is an active-site residue. The Zn(2+) site is built by H315 and D326.

It belongs to the peptidase M35 family. Requires Zn(2+) as cofactor.

Its subcellular location is the secreted. It catalyses the reaction Preferential cleavage of bonds with hydrophobic residues in P1'. Also 3-Asn-|-Gln-4 and 8-Gly-|-Ser-9 bonds in insulin B chain.. Its function is as follows. Probable secreted metalloprotease that shows high activities on basic nuclear substrates such as histone and protamine. May be involved in virulence. The protein is Probable neutral protease 2 homolog TRV_06370 of Trichophyton verrucosum (strain HKI 0517).